A 315-amino-acid chain; its full sequence is DNA-directed RNA polymerase subunit alpha (315 aa).

The tract at residues 1–228 is alpha N-terminal domain (alpha-NTD); the sequence is MAQFQIECVE…DLFNPLKDIS (228 aa). The tract at residues 238 to 315 is alpha C-terminal domain (alpha-CTD); it reads IPDDPTAQIP…LPQERSSKHS (78 aa).

This sequence belongs to the RNA polymerase alpha chain family. In cyanobacteria the RNAP catalytic core is composed of 2 alpha, 1 beta, 1 beta', 1 gamma and 1 omega subunit. When a sigma factor is associated with the core the holoenzyme is formed, which can initiate transcription.

The catalysed reaction is RNA(n) + a ribonucleoside 5'-triphosphate = RNA(n+1) + diphosphate. Its function is as follows. DNA-dependent RNA polymerase catalyzes the transcription of DNA into RNA using the four ribonucleoside triphosphates as substrates. In Trichormus variabilis (strain ATCC 29413 / PCC 7937) (Anabaena variabilis), this protein is DNA-directed RNA polymerase subunit alpha.